Here is a 351-residue protein sequence, read N- to C-terminus: Phospho-N-acetylmuramoyl-pentapeptide-transferase (351 aa).

10 consecutive transmembrane segments (helical) span residues 17-37 (TAYA…FIIL), 63-83 (IPTM…FFWI), 85-105 (FWNI…CLGF), 124-144 (FKIY…YYFG), 158-178 (SLKL…LISA), 190-210 (GLAI…AYLA), 230-250 (LVVF…FNAY), 254-274 (IMMG…TALI), 279-299 (ILFA…IIQV), and 328-348 (QVVI…LSTL).

The protein belongs to the glycosyltransferase 4 family. MraY subfamily. It depends on Mg(2+) as a cofactor.

The protein resides in the cell inner membrane. The enzyme catalyses UDP-N-acetyl-alpha-D-muramoyl-L-alanyl-gamma-D-glutamyl-meso-2,6-diaminopimeloyl-D-alanyl-D-alanine + di-trans,octa-cis-undecaprenyl phosphate = di-trans,octa-cis-undecaprenyl diphospho-N-acetyl-alpha-D-muramoyl-L-alanyl-D-glutamyl-meso-2,6-diaminopimeloyl-D-alanyl-D-alanine + UMP. Its pathway is cell wall biogenesis; peptidoglycan biosynthesis. Its function is as follows. Catalyzes the initial step of the lipid cycle reactions in the biosynthesis of the cell wall peptidoglycan: transfers peptidoglycan precursor phospho-MurNAc-pentapeptide from UDP-MurNAc-pentapeptide onto the lipid carrier undecaprenyl phosphate, yielding undecaprenyl-pyrophosphoryl-MurNAc-pentapeptide, known as lipid I. The sequence is that of Phospho-N-acetylmuramoyl-pentapeptide-transferase from Borrelia turicatae (strain 91E135).